The primary structure comprises 643 residues: Macrolide export ATP-binding/permease protein MacB (643 aa).

An ABC transporter domain is found at 6–244; sequence IELKGVSRVF…QVRSPFGVRH (239 aa). 42–49 contributes to the ATP binding site; sequence GASGSGKS. The next 4 helical transmembrane spans lie at 270–290, 518–538, 569–589, and 606–626; these read VLTL…LAIG, LTIL…IGVM, FLIE…VIGL, and LMPI…FGYL.

The protein belongs to the ABC transporter superfamily. Macrolide exporter (TC 3.A.1.122) family. In terms of assembly, homodimer.

Its subcellular location is the cell inner membrane. In terms of biological role, non-canonical ABC transporter that contains transmembrane domains (TMD), which form a pore in the inner membrane, and an ATP-binding domain (NBD), which is responsible for energy generation. Confers resistance against macrolides. The sequence is that of Macrolide export ATP-binding/permease protein MacB from Wolinella succinogenes (strain ATCC 29543 / DSM 1740 / CCUG 13145 / JCM 31913 / LMG 7466 / NCTC 11488 / FDC 602W) (Vibrio succinogenes).